The primary structure comprises 212 residues: Secreted and transmembrane protein 1b (212 aa).

An N-terminal signal peptide occupies residues 1-28 (MLAYSVTSSGLFPRMLWALLLLAASLNA). The Extracellular segment spans residues 29–160 (HNDVWDEPCC…DKPPTAVRTE (132 aa)). Cysteine 38 and cysteine 55 form a disulfide bridge. N-linked (GlcNAc...) asparagine glycosylation is found at asparagine 56, asparagine 85, asparagine 114, and asparagine 130. Residues 161–181 (VIIIIAIATTIIITGIGVFVW) form a helical membrane-spanning segment. Topologically, residues 182-212 (YKQFPVAPQIQMSVPCLIHGSPGIPYLTLPP) are cytoplasmic.

This sequence belongs to the SECTM family. In terms of assembly, interacts with CD7.

The protein localises to the cell membrane. The protein resides in the secreted. In terms of biological role, may be involved in thymocyte signaling. The polypeptide is Secreted and transmembrane protein 1b (Sectm1b) (Mus musculus (Mouse)).